The chain runs to 367 residues: Putrescine-binding periplasmic protein SpuD (367 aa).

Positions 1-24 (MMKRFGKTLLALTLAGSVAGMAQA) are cleaved as a signal peptide. A putrescine-binding site is contributed by 36-37 (SD). A disulfide bridge links Cys-173 with Cys-236. Putrescine is bound by residues Asp-244 and Asp-275.

It belongs to the bacterial solute-binding protein PotD/PotF family.

It is found in the periplasm. The protein localises to the secreted. In terms of biological role, putrescine-binding protein probably required for putrescine uptake into cells. Binds putrescine with high affinity, spermidine with relatively low affinity. Does not bind cadaverine or spermine. Putrescine binding induces large inter-domain conformational changes. The protein is Putrescine-binding periplasmic protein SpuD (spuD) of Pseudomonas aeruginosa (strain UCBPP-PA14).